Reading from the N-terminus, the 428-residue chain is Spliceosome RNA helicase DDX39B (428 aa).

Over residues M1 to E19 the composition is skewed to acidic residues. The tract at residues M1 to K32 is disordered. A2 carries the post-translational modification N-acetylalanine. N6-acetyllysine; alternate is present on K36. K36 is covalently cross-linked (Glycyl lysine isopeptide (Lys-Gly) (interchain with G-Cter in SUMO2); alternate). Phosphoserine is present on residues S38 and S41. The short motif at S45–H73 is the Q motif element. The 174-residue stretch at I76–I249 folds into the Helicase ATP-binding domain. Residue A89–T96 coordinates ATP. T172 is modified (phosphothreonine). A DECD box motif is present at residues D196–D199. Residues G261–S422 enclose the Helicase C-terminal domain.

The protein belongs to the DEAD box helicase family. DECD subfamily. Homodimer, and heterodimer with DDX39A. DDX39B interacts with the THO subcomplex to form the THO-DDX39B complex which multimerizes into a 28-subunit tetrameric assembly. Component of the transcription/export (TREX) complex at least composed of ALYREF/THOC4, DDX39B, SARNP/CIP29, CHTOP and the THO subcomplex; in the complex interacts with THOC2. THOC1-THOC2-THOC3-DDX39B subcomplex is sufficient for the interaction with export factor NXF1-NXT1. TREX seems to have a dynamic structure involving ATP-dependent remodeling. Within the TREX complex bridges ALYREF/THOC4 and the THO subcomplex, and, in a ATP-dependent manner, ALYREF/THOC4 and SARNP/CIP29. Component of the spliceosome. Interacts directly with U2AF2. Interacts with RBM8A, RNPS1 and SRRM1, FYTTD1/UIF, THOC1, MX1 and POLDIP3. Interacts with LUZP4. Interacts with SARNP/CIP29 (via the C-terminal domain); the interaction is direct and facilitates RNA binding of DDX39B.

The protein localises to the nucleus. Its subcellular location is the nucleus speckle. It is found in the cytoplasm. The catalysed reaction is ATP + H2O = ADP + phosphate + H(+). Involved in nuclear export of spliced and unspliced mRNA. Component of the TREX complex which is thought to couple mRNA transcription, processing and nuclear export, and specifically associates with spliced mRNA and not with unspliced pre-mRNA. The TREX complex is recruited to spliced mRNAs by a transcription-independent mechanism, binds to mRNA upstream of the exon-junction complex (EJC) and is recruited in a splicing- and cap-dependent manner to a region near the 5' end of the mRNA where it functions in mRNA export to the cytoplasm via the TAP/NXF1 pathway. The THOC1-THOC2-THOC3 core complex alone is sufficient to promote ATPase activity of DDX39B; in the complex THOC2 is the only component that directly interacts with DDX39B. Associates with SARNP/CIP29, which facilitates RNA binding of DDX39B and likely plays a role in mRNA export. May undergo several rounds of ATP hydrolysis during assembly of TREX to drive subsequent loading of components such as ALYREF/THOC4 and CHTOP onto mRNA. Also associates with pre-mRNA independent of ALYREF/THOC4. Involved in the nuclear export of intronless mRNA; the ATP-bound form is proposed to recruit export adapter ALYREF/THOC4 to intronless mRNA; its ATPase activity is cooperatively stimulated by RNA and ALYREF/THOC4 and ATP hydrolysis is thought to trigger the dissociation from RNA to allow the association of ALYREF/THOC4 and the NXF1-NXT1 heterodimer. Involved in transcription elongation and genome stability. Functionally, splice factor that is required for the first ATP-dependent step in spliceosome assembly and for the interaction of U2 snRNP with the branchpoint. Has both RNA-stimulated ATP binding/hydrolysis activity and ATP-dependent RNA unwinding activity. Even with the stimulation of RNA, the ATPase activity is weak. Can only hydrolyze ATP but not other NTPs. The RNA stimulation of ATPase activity does not have a strong preference for the sequence and length of the RNA. However, ssRNA stimulates the ATPase activity much more strongly than dsRNA. Can unwind 5' or 3' overhangs or blunt end RNA duplexes in vitro. The ATPase and helicase activities are not influenced by U2AF2; the effect of ALYREF/THOC4 is reported conflictingly. The chain is Spliceosome RNA helicase DDX39B (DDX39B) from Canis lupus familiaris (Dog).